The chain runs to 942 residues: tRNAse Z TRZ4, mitochondrial (942 aa).

A mitochondrion-targeting transit peptide spans 1–50 (MLTSSMPQNLSLFGFSPLKSSSFALILRPFSLYPPIFASSSPAPSRRPPR). The disordered stretch occupies residues 38–85 (ASSSPAPSRRPPRTAGYRRSGPSPPRRKWSSFEEQKRKGRSPMEKDKA). Over residues 67-85 (SSFEEQKRKGRSPMEKDKA) the composition is skewed to basic and acidic residues.

Belongs to the RNase Z family. Homodimer. The cofactor is Zn(2+). Ca(2+) is required as a cofactor. Requires Mn(2+) as cofactor. It depends on Mg(2+) as a cofactor.

The protein localises to the mitochondrion. The enzyme catalyses Endonucleolytic cleavage of RNA, removing extra 3' nucleotides from tRNA precursor, generating 3' termini of tRNAs. A 3'-hydroxy group is left at the tRNA terminus and a 5'-phosphoryl group is left at the trailer molecule.. Its function is as follows. Zinc phosphodiesterase, which displays tRNA 3'-processing endonuclease activity. Involved in tRNA maturation, by removing a 3'-trailer from precursor tRNA. Can process the mitochondrial tRNA-like structures (t-elements). The sequence is that of tRNAse Z TRZ4, mitochondrial from Arabidopsis thaliana (Mouse-ear cress).